The sequence spans 308 residues: Acetyl-coenzyme A carboxylase carboxyl transferase subunit beta (308 aa).

The CoA carboxyltransferase N-terminal domain occupies 26–295 (LWIKDPETGE…EQKPLEPEIL (270 aa)).

This sequence belongs to the AccD/PCCB family. As to quaternary structure, acetyl-CoA carboxylase is a heterohexamer composed of biotin carboxyl carrier protein (AccB), biotin carboxylase (AccC) and two subunits each of ACCase subunit alpha (AccA) and ACCase subunit beta (AccD).

Its subcellular location is the cytoplasm. The enzyme catalyses N(6)-carboxybiotinyl-L-lysyl-[protein] + acetyl-CoA = N(6)-biotinyl-L-lysyl-[protein] + malonyl-CoA. Its pathway is lipid metabolism; malonyl-CoA biosynthesis; malonyl-CoA from acetyl-CoA: step 1/1. Functionally, component of the acetyl coenzyme A carboxylase (ACC) complex. Biotin carboxylase (BC) catalyzes the carboxylation of biotin on its carrier protein (BCCP) and then the CO(2) group is transferred by the transcarboxylase to acetyl-CoA to form malonyl-CoA. The chain is Acetyl-coenzyme A carboxylase carboxyl transferase subunit beta from Mesorhizobium japonicum (strain LMG 29417 / CECT 9101 / MAFF 303099) (Mesorhizobium loti (strain MAFF 303099)).